A 509-amino-acid polypeptide reads, in one-letter code: Cytochrome P450 4A10 (509 aa).

Transmembrane regions (helical) follow at residues 15–35 (LSGF…VKAV) and 121–141 (LLAP…WFQH). E320 contributes to the heme binding site. Position 439 is a phosphoserine (S439). C456 is a binding site for heme.

Belongs to the cytochrome P450 family. Heme is required as a cofactor. In terms of tissue distribution, highly expressed in the kidneys of both genders.

The protein localises to the endoplasmic reticulum membrane. It localises to the microsome membrane. The catalysed reaction is an omega-methyl-long-chain fatty acid + reduced [NADPH--hemoprotein reductase] + O2 = an omega-hydroxy-long-chain fatty acid + oxidized [NADPH--hemoprotein reductase] + H2O + H(+). The enzyme catalyses dodecanoate + reduced [NADPH--hemoprotein reductase] + O2 = 12-hydroxydodecanoate + oxidized [NADPH--hemoprotein reductase] + H2O + H(+). It carries out the reaction dodecanoate + reduced [NADPH--hemoprotein reductase] + O2 = 11-hydroxydodecanoate + oxidized [NADPH--hemoprotein reductase] + H2O + H(+). It catalyses the reaction tetradecanoate + reduced [NADPH--hemoprotein reductase] + O2 = 14-hydroxytetradecanoate + oxidized [NADPH--hemoprotein reductase] + H2O + H(+). The catalysed reaction is hexadecanoate + reduced [NADPH--hemoprotein reductase] + O2 = 16-hydroxyhexadecanoate + oxidized [NADPH--hemoprotein reductase] + H2O + H(+). The enzyme catalyses (9Z)-octadecenoate + reduced [NADPH--hemoprotein reductase] + O2 = 18-hydroxy-(9Z)-octadecenoate + oxidized [NADPH--hemoprotein reductase] + H2O + H(+). It carries out the reaction (9Z,12Z)-octadecadienoate + reduced [NADPH--hemoprotein reductase] + O2 = 18-hydroxy-(9Z,12Z)-octadecadienoate + oxidized [NADPH--hemoprotein reductase] + H2O + H(+). It catalyses the reaction (9Z,12Z)-octadecadienoate + reduced [NADPH--hemoprotein reductase] + O2 = 17-hydroxy-(9Z,12Z)-octadecadienoate + oxidized [NADPH--hemoprotein reductase] + H2O + H(+). The catalysed reaction is (5Z,8Z,11Z,14Z)-eicosatetraenoate + reduced [NADPH--hemoprotein reductase] + O2 = 20-hydroxy-(5Z,8Z,11Z,14Z)-eicosatetraenoate + oxidized [NADPH--hemoprotein reductase] + H2O + H(+). The enzyme catalyses 8,9-epoxy-(5Z,11Z,14Z)-eicosatrienoate + reduced [NADPH--hemoprotein reductase] + O2 = 20-hydroxy-8,9-epoxy-(5Z,11Z,14Z)-eicosatrienoate + oxidized [NADPH--hemoprotein reductase] + H2O + H(+). Its function is as follows. A cytochrome P450 monooxygenase involved in the metabolism of fatty acids. Catalyzes predominantly the oxidation of the terminal carbon (omega-oxidation) of long-chain fatty acids. Acts as a major omega-hydroxylase for dodecanoic (lauric) acid in liver. In kidney, may play an important role in omega-hydroxylation of (5Z,8Z,11Z,14Z)-eicosatetraenoic acid (arachidonate) to 20-hydroxyeicosatetraenoic acid (20-HETE), a signaling molecule acting both as vasoconstrictive and natriuretic with overall effect on arterial blood pressure. Also participates in the formation of anti-inflammatory hydroxyepoxyeicosatrienoic acids (HEETs) in kidney by converting 8,9-epoxyeicosatrienoic acid (EET) to 20,8,9-HEET, an activator of PPARA. Displays substantially lower fatty acid omega-1 hydroxylase activity. Mechanistically, uses molecular oxygen inserting one oxygen atom into a substrate, and reducing the second into a water molecule, with two electrons provided by NADPH via cytochrome P450 reductase (CPR; NADPH-ferrihemoprotein reductase). The protein is Cytochrome P450 4A10 of Mus musculus (Mouse).